Consider the following 404-residue polypeptide: Serine/threonine transporter SstT (404 aa).

The next 9 membrane-spanning stretches (helical) occupy residues 17-37 (IGIG…VTAI), 39-59 (ILGQ…VFAL), 75-95 (MTLI…VAVI), 138-158 (ALAT…GLAL), 179-199 (IVVW…FSTV), 212-232 (LLIL…NPLL), 287-307 (IPLG…VLTL), 319-339 (FLTA…ASGV), and 354-374 (FGIS…VGVI).

This sequence belongs to the dicarboxylate/amino acid:cation symporter (DAACS) (TC 2.A.23) family.

It localises to the cell membrane. It catalyses the reaction L-serine(in) + Na(+)(in) = L-serine(out) + Na(+)(out). The catalysed reaction is L-threonine(in) + Na(+)(in) = L-threonine(out) + Na(+)(out). Functionally, involved in the import of serine and threonine into the cell, with the concomitant import of sodium (symport system). This chain is Serine/threonine transporter SstT, found in Streptococcus equi subsp. equi (strain 4047).